The primary structure comprises 585 residues: MNLFTDFEARIKTALEQIDLVREKRSELDFGRIAVEPPRDASHGDVATNAAMVLAKPLGTNPRALADIIIAKLREDADVADVSVAGPGFINIRLAVGYWQRLLAAMIGAGTDYGRSTLGEGRKVNVEYVSANPTGPMHVGHCRGAVVGDALANLLAFAGYGVEKEYYINDAGSQIDVLARSVFLRYREALGEKIGEIPSGLYPGDYLVPVGQSLAADYGVRLHNMPEDQWMPIVKDRTIDAMMVMIREDLASLNVHHDIFFSERTLHANGAAAIRTAINDLTFKGYVYKGTLPPPKGQLPEDWEDREQTLFRSTEVGDDMDRPLIKSDGSYTYFAADVAYFKNKFDRGFDEMIYVLGADHGGYVKRLEAVARGVSDGKAKLTVLLCQLVKLYRNGEPVKMSKRSGDFVTLRDVVEEVGSDSVRFMMLYRKNSEPLDFDFAKVTEQSKDNPVFYVQYAHARCMSVFRQAREAFGDLDVSPEEFAQTVAGIGDPAELQLVAKLAEFPRIVEAAAQSQEPHRLAFYLYDLASSFHAHWNKGKDQPELRFVNDKNRESTIARLGLVYAVASVLKSGLAITGTAAPDEMR.

The short motif at A131–H141 is the 'HIGH' region element.

The protein belongs to the class-I aminoacyl-tRNA synthetase family. Monomer.

It localises to the cytoplasm. The enzyme catalyses tRNA(Arg) + L-arginine + ATP = L-arginyl-tRNA(Arg) + AMP + diphosphate. The sequence is that of Arginine--tRNA ligase from Rhizobium leguminosarum bv. trifolii (strain WSM2304).